Here is a 232-residue protein sequence, read N- to C-terminus: Ribonuclease 3 (232 aa).

Residues 5–134 (QTVLKNHFAI…FLGALLLDKD (130 aa)) form the RNase III domain. Glutamate 47 is a Mg(2+) binding site. Aspartate 51 is an active-site residue. Positions 120 and 123 each coordinate Mg(2+). Glutamate 123 is an active-site residue. The DRBM domain occupies 160 to 229 (DYKTHLQELL…AKNAVEKGLD (70 aa)).

It belongs to the ribonuclease III family. As to quaternary structure, homodimer. The cofactor is Mg(2+).

The protein localises to the cytoplasm. The enzyme catalyses Endonucleolytic cleavage to 5'-phosphomonoester.. Its function is as follows. Digests double-stranded RNA. Involved in the processing of primary rRNA transcript to yield the immediate precursors to the large and small rRNAs (23S and 16S). Processes some mRNAs, and tRNAs when they are encoded in the rRNA operon. Processes pre-crRNA and tracrRNA of type II CRISPR loci if present in the organism. The sequence is that of Ribonuclease 3 from Streptococcus pneumoniae (strain P1031).